The primary structure comprises 64 residues: Large ribosomal subunit protein bL35 (64 aa).

Belongs to the bacterial ribosomal protein bL35 family.

This chain is Large ribosomal subunit protein bL35, found in Vibrio parahaemolyticus serotype O3:K6 (strain RIMD 2210633).